Reading from the N-terminus, the 471-residue chain is Glutamate--tRNA ligase (471 aa).

Positions 9–19 (PSPTGYLHVGG) match the 'HIGH' region motif. Zn(2+) contacts are provided by Cys98, Cys100, Cys125, and His127. The 'KMSKS' region signature appears at 237–241 (KLSKR). Lys240 provides a ligand contact to ATP.

Belongs to the class-I aminoacyl-tRNA synthetase family. Glutamate--tRNA ligase type 1 subfamily. In terms of assembly, monomer. Requires Zn(2+) as cofactor.

It localises to the cytoplasm. The catalysed reaction is tRNA(Glu) + L-glutamate + ATP = L-glutamyl-tRNA(Glu) + AMP + diphosphate. Catalyzes the attachment of glutamate to tRNA(Glu) in a two-step reaction: glutamate is first activated by ATP to form Glu-AMP and then transferred to the acceptor end of tRNA(Glu). The protein is Glutamate--tRNA ligase of Shigella flexneri.